The sequence spans 33 residues: Cytochrome b6-f complex subunit 7 (33 aa).

A helical transmembrane segment spans residues 5–25; the sequence is IFNTAVITFTLVLVGLGAGYL.

This sequence belongs to the PetM family. In terms of assembly, the 4 large subunits of the cytochrome b6-f complex are cytochrome b6, subunit IV (17 kDa polypeptide, PetD), cytochrome f and the Rieske protein, while the 4 small subunits are PetG, PetL, PetM and PetN. The complex functions as a dimer.

The protein localises to the cellular thylakoid membrane. In terms of biological role, component of the cytochrome b6-f complex, which mediates electron transfer between photosystem II (PSII) and photosystem I (PSI), cyclic electron flow around PSI, and state transitions. This Thermosynechococcus vestitus (strain NIES-2133 / IAM M-273 / BP-1) protein is Cytochrome b6-f complex subunit 7.